The sequence spans 188 residues: Elongation factor P (188 aa).

The protein belongs to the elongation factor P family.

It localises to the cytoplasm. It participates in protein biosynthesis; polypeptide chain elongation. Functionally, involved in peptide bond synthesis. Stimulates efficient translation and peptide-bond synthesis on native or reconstituted 70S ribosomes in vitro. Probably functions indirectly by altering the affinity of the ribosome for aminoacyl-tRNA, thus increasing their reactivity as acceptors for peptidyl transferase. This chain is Elongation factor P, found in Aeromonas salmonicida (strain A449).